Here is a 360-residue protein sequence, read N- to C-terminus: Photosystem II protein D1 (360 aa).

3 consecutive transmembrane segments (helical) span residues 29-46 (YIGW…TATS), 118-133 (HFLL…EWEL), and 142-156 (WIFV…AASA). Histidine 118 contributes to the chlorophyll a binding site. Residue tyrosine 126 coordinates pheophytin a. [CaMn4O5] cluster contacts are provided by aspartate 170 and glutamate 189. Residues 197–218 (FHMAGVAGVFGGSLFSAMHGSL) form a helical membrane-spanning segment. Histidine 198 is a binding site for chlorophyll a. A quinone contacts are provided by residues histidine 215 and 264 to 265 (SF). Histidine 215 lines the Fe cation pocket. Histidine 272 provides a ligand contact to Fe cation. Residues 274–288 (FLALWPVLGIWLTAM) traverse the membrane as a helical segment. [CaMn4O5] cluster contacts are provided by histidine 332, glutamate 333, aspartate 342, and alanine 344. Positions 345–360 (SGDVLPVAFTAPAVNA) are excised as a propeptide.

It belongs to the reaction center PufL/M/PsbA/D family. In terms of assembly, PSII is composed of 1 copy each of membrane proteins PsbA, PsbB, PsbC, PsbD, PsbE, PsbF, PsbH, PsbI, PsbJ, PsbK, PsbL, PsbM, PsbT, PsbX, PsbY, PsbZ, Psb30/Ycf12, at least 3 peripheral proteins of the oxygen-evolving complex and a large number of cofactors. It forms dimeric complexes. The D1/D2 heterodimer binds P680, chlorophylls that are the primary electron donor of PSII, and subsequent electron acceptors. It shares a non-heme iron and each subunit binds pheophytin, quinone, additional chlorophylls, carotenoids and lipids. D1 provides most of the ligands for the Mn4-Ca-O5 cluster of the oxygen-evolving complex (OEC). There is also a Cl(-1) ion associated with D1 and D2, which is required for oxygen evolution. The PSII complex binds additional chlorophylls, carotenoids and specific lipids. is required as a cofactor. In terms of processing, tyr-161 forms a radical intermediate that is referred to as redox-active TyrZ, YZ or Y-Z. Post-translationally, C-terminally processed by CTPA; processing is essential to allow assembly of the oxygen-evolving complex and thus photosynthetic growth.

It localises to the plastid. The protein resides in the chloroplast thylakoid membrane. It carries out the reaction 2 a plastoquinone + 4 hnu + 2 H2O = 2 a plastoquinol + O2. Photosystem II (PSII) is a light-driven water:plastoquinone oxidoreductase that uses light energy to abstract electrons from H(2)O, generating O(2) and a proton gradient subsequently used for ATP formation. It consists of a core antenna complex that captures photons, and an electron transfer chain that converts photonic excitation into a charge separation. The D1/D2 (PsbA/PsbD) reaction center heterodimer binds P680, the primary electron donor of PSII as well as several subsequent electron acceptors. This Thalassiosira pseudonana (Marine diatom) protein is Photosystem II protein D1.